The primary structure comprises 382 residues: Lipid-A-disaccharide synthase (382 aa).

It belongs to the LpxB family.

It catalyses the reaction 2-N,3-O-bis[(3R)-3-hydroxytetradecanoyl]-alpha-D-glucosaminyl 1-phosphate + UDP-2-N,3-O-bis[(3R)-3-hydroxytetradecanoyl]-alpha-D-glucosamine = lipid A disaccharide (E. coli) + UDP + H(+). It carries out the reaction a lipid X + a UDP-2-N,3-O-bis[(3R)-3-hydroxyacyl]-alpha-D-glucosamine = a lipid A disaccharide + UDP + H(+). It participates in glycolipid biosynthesis; lipid IV(A) biosynthesis; lipid IV(A) from (3R)-3-hydroxytetradecanoyl-[acyl-carrier-protein] and UDP-N-acetyl-alpha-D-glucosamine: step 5/6. Functionally, condensation of UDP-2,3-diacylglucosamine and 2,3-diacylglucosamine-1-phosphate to form lipid A disaccharide, a precursor of lipid A, a phosphorylated glycolipid that anchors the lipopolysaccharide to the outer membrane of the cell. In Salmonella paratyphi B (strain ATCC BAA-1250 / SPB7), this protein is Lipid-A-disaccharide synthase.